Here is a 948-residue protein sequence, read N- to C-terminus: Non-lysosomal glucosylceramidase (948 aa).

Residues methionine 1 to serine 736 are Extracellular-facing. The segment covering serine 177–lysine 195 has biased composition (basic and acidic residues). The disordered stretch occupies residues serine 177–glutamine 197. Asparagine 200 is a glycosylation site (N-linked (GlcNAc...) asparagine). At serine 214 the chain carries Phosphoserine. Residues asparagine 288, asparagine 555, and asparagine 629 are each glycosylated (N-linked (GlcNAc...) asparagine). Serine 667 and serine 669 each carry phosphoserine. N-linked (GlcNAc...) asparagine glycosylation occurs at asparagine 673. Residues glycine 737–leucine 753 form a helical membrane-spanning segment. Residues aspartate 754–aspartate 948 lie on the Cytoplasmic side of the membrane.

It belongs to the non-lysosomal glucosylceramidase family.

The protein localises to the cell membrane. The enzyme catalyses a beta-D-glucosyl-(1&lt;-&gt;1')-N-acylsphing-4-enine + H2O = an N-acylsphing-4-enine + D-glucose. Non-lysosomal glucosylceramidase that catalyzes the conversion of glucosylceramide to free glucose and ceramide. The chain is Non-lysosomal glucosylceramidase from Drosophila melanogaster (Fruit fly).